A 61-amino-acid chain; its full sequence is Large ribosomal subunit protein eL24 (61 aa).

Cysteine 7, cysteine 10, cysteine 33, and cysteine 37 together coordinate Zn(2+). The C4-type zinc finger occupies 7-37 (CTYCGRSIEPGTGLMYVKNDGSVLWFCSSKC).

It belongs to the eukaryotic ribosomal protein eL24 family. Part of the 50S ribosomal subunit. Forms a cluster with proteins L3 and L14. Zn(2+) is required as a cofactor.

Functionally, binds to the 23S rRNA. The sequence is that of Large ribosomal subunit protein eL24 from Hyperthermus butylicus (strain DSM 5456 / JCM 9403 / PLM1-5).